The chain runs to 522 residues: Sensory neuron membrane protein 2 (522 aa).

Over 1-7 (MLGKHTK) the chain is Cytoplasmic. Residues 8-28 (LFFGVSLVALIVSVILAAWGF) form a helical membrane-spanning segment. At 29–469 (PKIVSKQIQK…QSHTLLGYVE (441 aa)) the chain is on the extracellular side. 9 N-linked (GlcNAc...) asparagine glycosylation sites follow: Asn-44, Asn-67, Asn-104, Asn-166, Asn-191, Asn-228, Asn-272, Asn-314, and Asn-343. Intrachain disulfides connect Cys-268/Cys-338, Cys-299/Cys-362, and Cys-340/Cys-351. A helical transmembrane segment spans residues 470 to 490 (AVRWALLAIAIVATAISAIAV). Topologically, residues 491-522 (ARSGLIPVWPRNANSVSFILSPHPNSDVNKVH) are cytoplasmic.

Belongs to the CD36 family. In terms of tissue distribution, detected in both male and female antennal tissues. Expression is two to three fold higher in male compared to female antenna. Detected at low levels in all body tissues except the female abdomen.

The protein resides in the cell membrane. Its function is as follows. Plays an olfactory role that is not restricted to pheromone sensitivity. The protein is Sensory neuron membrane protein 2 of Ostrinia furnacalis (Asian corn borer).